Consider the following 350-residue polypeptide: tRNA uridine(34) hydroxylase (350 aa).

In terms of domain architecture, Rhodanese spans 146 to 240 (DDPDAVFIDM…YARRAREQGL (95 aa)). The active-site Cysteine persulfide intermediate is cysteine 200. The segment covering 319–328 (RRRRAGRENG) has biased composition (basic and acidic residues). Positions 319 to 350 (RRRRAGRENGNKIFNKSRGRLNSKLSIPDPAE) are disordered.

This sequence belongs to the TrhO family.

The catalysed reaction is uridine(34) in tRNA + AH2 + O2 = 5-hydroxyuridine(34) in tRNA + A + H2O. Catalyzes oxygen-dependent 5-hydroxyuridine (ho5U) modification at position 34 in tRNAs. This chain is tRNA uridine(34) hydroxylase, found in Salmonella dublin (strain CT_02021853).